The sequence spans 236 residues: Large ribosomal subunit protein uL1 (236 aa).

Belongs to the universal ribosomal protein uL1 family. Part of the 50S ribosomal subunit.

Binds directly to 23S rRNA. The L1 stalk is quite mobile in the ribosome, and is involved in E site tRNA release. Functionally, protein L1 is also a translational repressor protein, it controls the translation of the L11 operon by binding to its mRNA. The polypeptide is Large ribosomal subunit protein uL1 (Protochlamydia amoebophila (strain UWE25)).